The primary structure comprises 106 residues: UPF0145 protein Nmul_A0734 (106 aa).

It belongs to the UPF0145 family.

This Nitrosospira multiformis (strain ATCC 25196 / NCIMB 11849 / C 71) protein is UPF0145 protein Nmul_A0734.